The following is a 227-amino-acid chain: Cytochrome c oxidase subunit 2 (227 aa).

At 1 to 14 (MAYPFQLGLQDATS) the chain is on the mitochondrial intermembrane side. A helical membrane pass occupies residues 15–45 (PIMEELTNFHDHTLMIVFLISSLVLYLISLM). Topologically, residues 46–59 (LTTKLIHTNTMDAQ) are mitochondrial matrix. The helical transmembrane segment at 60–87 (EVETVWTILPAIILIMIALPSLRILYLM) threads the bilayer. Over 88 to 227 (DEINNPVLTV…LFENWSTSMI (140 aa)) the chain is Mitochondrial intermembrane. 6 residues coordinate Cu cation: His-161, Cys-196, Glu-198, Cys-200, His-204, and Met-207. Glu-198 is a Mg(2+) binding site.

Belongs to the cytochrome c oxidase subunit 2 family. As to quaternary structure, component of the cytochrome c oxidase (complex IV, CIV), a multisubunit enzyme composed of 14 subunits. The complex is composed of a catalytic core of 3 subunits MT-CO1, MT-CO2 and MT-CO3, encoded in the mitochondrial DNA, and 11 supernumerary subunits COX4I, COX5A, COX5B, COX6A, COX6B, COX6C, COX7A, COX7B, COX7C, COX8 and NDUFA4, which are encoded in the nuclear genome. The complex exists as a monomer or a dimer and forms supercomplexes (SCs) in the inner mitochondrial membrane with NADH-ubiquinone oxidoreductase (complex I, CI) and ubiquinol-cytochrome c oxidoreductase (cytochrome b-c1 complex, complex III, CIII), resulting in different assemblies (supercomplex SCI(1)III(2)IV(1) and megacomplex MCI(2)III(2)IV(2)). Found in a complex with TMEM177, COA6, COX18, COX20, SCO1 and SCO2. Interacts with TMEM177 in a COX20-dependent manner. Interacts with COX20. Interacts with COX16. Requires Cu cation as cofactor.

Its subcellular location is the mitochondrion inner membrane. It catalyses the reaction 4 Fe(II)-[cytochrome c] + O2 + 8 H(+)(in) = 4 Fe(III)-[cytochrome c] + 2 H2O + 4 H(+)(out). Component of the cytochrome c oxidase, the last enzyme in the mitochondrial electron transport chain which drives oxidative phosphorylation. The respiratory chain contains 3 multisubunit complexes succinate dehydrogenase (complex II, CII), ubiquinol-cytochrome c oxidoreductase (cytochrome b-c1 complex, complex III, CIII) and cytochrome c oxidase (complex IV, CIV), that cooperate to transfer electrons derived from NADH and succinate to molecular oxygen, creating an electrochemical gradient over the inner membrane that drives transmembrane transport and the ATP synthase. Cytochrome c oxidase is the component of the respiratory chain that catalyzes the reduction of oxygen to water. Electrons originating from reduced cytochrome c in the intermembrane space (IMS) are transferred via the dinuclear copper A center (CU(A)) of subunit 2 and heme A of subunit 1 to the active site in subunit 1, a binuclear center (BNC) formed by heme A3 and copper B (CU(B)). The BNC reduces molecular oxygen to 2 water molecules using 4 electrons from cytochrome c in the IMS and 4 protons from the mitochondrial matrix. The chain is Cytochrome c oxidase subunit 2 (MT-CO2) from Gerbillurus vallinus (Brush-tailed hairy-footed gerbil).